The chain runs to 270 residues: A-type potassium channel modulatory protein KCNIP2 (270 aa).

Over residues 1–17 the composition is skewed to basic and acidic residues; the sequence is MRGQGRKESLSESRDLD. The disordered stretch occupies residues 1–34; the sequence is MRGQGRKESLSESRDLDGSYDQLTGHPPGPSKKA. At S9 the chain carries Phosphoserine. Residues C45 and C46 are each lipidated (S-palmitoyl cysteine). Positions 81 to 137 constitute an EF-hand 1; degenerate domain; that stretch reads FELSTVCHRPEGLEQLQEQTKFTRRELQVLYRGFKNECPSGIVNEENFKQIYSQFFP. 3 EF-hand domains span residues 140–175, 176–211, and 224–259; these read DSSN…ILRG, TIDD…IYDM, and APRE…DENI. Ca(2+) is bound by residues D153, N155, D157, S159, D164, D189, N191, D193, C195, E200, D237, N239, D241, and E248. An interaction with KCND2 region spans residues 257–270; sequence ENIMRSMQLFDNVI.

It belongs to the recoverin family. Component of heteromultimeric potassium channels. Identified in potassium channel complexes containing KCND1, KCND2, KCND3, KCNIP1, KCNIP2, KCNIP3, KCNIP4, DPP6 and DPP10. The KCND2-KCNIP2 channel complex contains four KCND2 and four KCNIP2 subunits. Interacts with KCND2. Probably part of a complex consisting of KCNIP1, KCNIP2 isoform 3 and KCND2. At least isoform 2 and isoform 3 can self-associate to form homodimers and homotetramers. Isoform 3 interacts with KCNIP1 in a calcium-dependent manner. Interacts with KCND3; each KCNIP2 monomer interacts with two adjacent KCND3 subunits, through both the N-terminal inactivation ball of a KCND3 subunit and a C-terminal helix from the adjacent KCND3 subunit, clamping them together; this interaction modulates the channel gating kinetics. In terms of processing, palmitoylated. Palmitoylation enhances association with the plasma membrane. As to expression, expressed in heart, brain and lung. In brain, abundantly expressed in striatum, hippocampus and olfactory bulb, moderately expressed in cerebral cortex and lowly expressed in thalamus and hypothalamus. Isoform 1 is predominant in cerebral cortex, striatum and hippocampus. Isoform 1, isoform 2 and isoform 3 are equally expressed in olfactory bulb. Iisoform 3 is expressed at high levels and isoform 1 at low levels in heart (in PubMed:11263977).

It is found in the cell membrane. Functionally, regulatory subunit of Kv4/D (Shal)-type voltage-gated rapidly inactivating A-type potassium channels. Modulates channel density, inactivation kinetics and rate of recovery from inactivation in a calcium-dependent and isoform-specific manner. Involved in KCND2 and KCND3 trafficking to the cell surface. Essential for the expression of I(To) currents in the heart. Required for normal protein levels of KCND2 in the heart ventricle. The sequence is that of A-type potassium channel modulatory protein KCNIP2 from Rattus norvegicus (Rat).